A 336-amino-acid polypeptide reads, in one-letter code: N-acetylornithine carbamoyltransferase (336 aa).

Carbamoyl phosphate is bound by residues 49–52 (SMRT), Trp77, and Arg112. N(2)-acetyl-L-ornithine is bound at residue Glu144. 148 to 151 (HPCQ) is a carbamoyl phosphate binding site. Positions 252 and 295 each coordinate N(2)-acetyl-L-ornithine. 294-295 (CL) is a carbamoyl phosphate binding site. An N6-carboxylysine modification is found at Lys302. Position 322 (Arg322) interacts with carbamoyl phosphate.

The protein belongs to the aspartate/ornithine carbamoyltransferase superfamily. AOTCase family. In terms of assembly, homotrimer.

It localises to the cytoplasm. The catalysed reaction is N(2)-acetyl-L-ornithine + carbamoyl phosphate = N(2)-acetyl-L-citrulline + phosphate + H(+). It participates in amino-acid biosynthesis; L-arginine biosynthesis. With respect to regulation, carboxylation at Lys-302 increases the catalytic activity of the enzyme. Catalyzes the transfer of the carbamoyl group from carbamoyl phosphate to the delta-amino group of N(2)-acetyl-L-ornithine to produce N(2)-acetyl-L-citrulline. This is a step in an alternative arginine biosynthesis pathway. The enzyme has no activity with ornithine. The sequence is that of N-acetylornithine carbamoyltransferase from Xylella fastidiosa (strain Temecula1 / ATCC 700964).